Consider the following 238-residue polypeptide: Large ribosomal subunit protein uL1 (238 aa).

It belongs to the universal ribosomal protein uL1 family. As to quaternary structure, part of the 50S ribosomal subunit.

Binds directly to 23S rRNA. The L1 stalk is quite mobile in the ribosome, and is involved in E site tRNA release. In terms of biological role, protein L1 is also a translational repressor protein, it controls the translation of the L11 operon by binding to its mRNA. The chain is Large ribosomal subunit protein uL1 from Frankia alni (strain DSM 45986 / CECT 9034 / ACN14a).